A 180-amino-acid polypeptide reads, in one-letter code: Putative 3-methyladenine DNA glycosylase (180 aa).

The protein belongs to the DNA glycosylase MPG family.

The protein is Putative 3-methyladenine DNA glycosylase of Wolbachia pipientis wMel.